The following is a 158-amino-acid chain: C-type lectin galactose-binding isoform (158 aa).

The first 23 residues, 1–23, serve as a signal peptide directing secretion; sequence MGRFLLVTLSLLVVAFSLNGANS. 3 disulfides stabilise this stretch: cysteine 26/cysteine 37, cysteine 54/cysteine 154, and cysteine 129/cysteine 146. The C-type lectin domain maps to 33–155; sequence RNGFCYKVFN…CTALRPFLCQ (123 aa). Ca(2+) is bound by residues glutamine 119, aspartate 121, and glutamate 127. Positions 119-121 match the Galactose-binding motif; it reads QPD. Residue asparagine 134 is glycosylated (N-linked (GlcNAc...) asparagine). Positions 142 and 143 each coordinate Ca(2+).

This sequence belongs to the true venom lectin family. Homodimer; disulfide-linked. In terms of tissue distribution, expressed by the venom gland.

It is found in the secreted. Its function is as follows. Galactose-binding lectin that binds to and agglutinates erythrocytes in a calcium-dependent manner. The chain is C-type lectin galactose-binding isoform from Pseudechis porphyriacus (Red-bellied black snake).